The primary structure comprises 254 residues: Axonemal dynein light intermediate polypeptide 1 (254 aa).

Positions 1–55 (MIPPADSLLKHDNPVLISKNTERKSPKSRPLKVSSPQTVLTAPVPPPPKPKTPLL) are disordered. Residues 175–245 (ALQAEQGKSD…KRTNQQLKAQ (71 aa)) are a coiled coil.

It belongs to the inner dynein arm light chain family.

The protein localises to the cell projection. It is found in the cilium. The protein resides in the flagellum. It localises to the dynein axonemal particle. Its subcellular location is the cytoplasm. Its function is as follows. Involved in sperm flagellum assembly. In Xenopus laevis (African clawed frog), this protein is Axonemal dynein light intermediate polypeptide 1.